Here is a 480-residue protein sequence, read N- to C-terminus: ATP synthase subunit beta 1 (480 aa).

Position 154-161 (154-161 (GGAGVGKT)) interacts with ATP.

The protein belongs to the ATPase alpha/beta chains family. In terms of assembly, F-type ATPases have 2 components, CF(1) - the catalytic core - and CF(0) - the membrane proton channel. CF(1) has five subunits: alpha(3), beta(3), gamma(1), delta(1), epsilon(1). CF(0) has four main subunits: a(1), b(1), b'(1) and c(9-12).

It localises to the cell inner membrane. It carries out the reaction ATP + H2O + 4 H(+)(in) = ADP + phosphate + 5 H(+)(out). Its function is as follows. Produces ATP from ADP in the presence of a proton gradient across the membrane. The catalytic sites are hosted primarily by the beta subunits. The polypeptide is ATP synthase subunit beta 1 (Bradyrhizobium sp. (strain BTAi1 / ATCC BAA-1182)).